We begin with the raw amino-acid sequence, 360 residues long: Probable neutral protease 2 homolog A (360 aa).

The signal sequence occupies residues methionine 1–alanine 17. Positions alanine 18–arginine 183 are excised as a propeptide. Cystine bridges form between cysteine 191–cysteine 262, cysteine 269–cysteine 287, and cysteine 300–cysteine 360. Asparagine 205 is a glycosylation site (N-linked (GlcNAc...) asparagine). Zn(2+) is bound at residue histidine 311. The active site involves glutamate 312. 2 residues coordinate Zn(2+): histidine 315 and aspartate 326.

Belongs to the peptidase M35 family. Zn(2+) serves as cofactor.

The protein resides in the secreted. It catalyses the reaction Preferential cleavage of bonds with hydrophobic residues in P1'. Also 3-Asn-|-Gln-4 and 8-Gly-|-Ser-9 bonds in insulin B chain.. Functionally, probable secreted metalloprotease that shows high activities on basic nuclear substrates such as histone and protamine. May be involved in virulence. This Trichophyton rubrum (Athlete's foot fungus) protein is Probable neutral protease 2 homolog A (NpII-A).